Consider the following 123-residue polypeptide: MVKLTSIAAGVAAIAAGVAAAPATTTLSPSDERVNLVELGVYVSDIRAHLAQYYLFQAAHPSETYPVEIAEAVFNYGDFTTMLTGIPAEQVTRVITGVPWYSTRLRPAISSALSKDGIYTIAN.

The first 20 residues, 1-20 (MVKLTSIAAGVAAIAAGVAA), serve as a signal peptide directing secretion.

It belongs to the SRP1/TIP1 family. Seripauperin subfamily.

The chain is Seripauperin-16 (PAU16) from Saccharomyces cerevisiae (strain ATCC 204508 / S288c) (Baker's yeast).